The sequence spans 185 residues: Ribosome-recycling factor (185 aa).

It belongs to the RRF family.

Its subcellular location is the cytoplasm. Responsible for the release of ribosomes from messenger RNA at the termination of protein biosynthesis. May increase the efficiency of translation by recycling ribosomes from one round of translation to another. The protein is Ribosome-recycling factor of Treponema denticola (strain ATCC 35405 / DSM 14222 / CIP 103919 / JCM 8153 / KCTC 15104).